Here is a 182-residue protein sequence, read N- to C-terminus: NADH-quinone oxidoreductase subunit I (182 aa).

4Fe-4S ferredoxin-type domains lie at 50 to 82 (IILSRDPDGDERCVACNLCAVACPVGCISLQKA) and 92 to 121 (EFFRINFSRCIFCGLCEEACPTTAIQMTPD). Cys-62, Cys-65, Cys-68, Cys-72, Cys-101, Cys-104, Cys-107, and Cys-111 together coordinate [4Fe-4S] cluster.

It belongs to the complex I 23 kDa subunit family. NDH-1 is composed of 14 different subunits. Subunits NuoA, H, J, K, L, M, N constitute the membrane sector of the complex. It depends on [4Fe-4S] cluster as a cofactor.

The protein resides in the cell inner membrane. The enzyme catalyses a quinone + NADH + 5 H(+)(in) = a quinol + NAD(+) + 4 H(+)(out). Functionally, NDH-1 shuttles electrons from NADH, via FMN and iron-sulfur (Fe-S) centers, to quinones in the respiratory chain. The immediate electron acceptor for the enzyme in this species is believed to be ubiquinone. Couples the redox reaction to proton translocation (for every two electrons transferred, four hydrogen ions are translocated across the cytoplasmic membrane), and thus conserves the redox energy in a proton gradient. The polypeptide is NADH-quinone oxidoreductase subunit I (Psychrobacter cryohalolentis (strain ATCC BAA-1226 / DSM 17306 / VKM B-2378 / K5)).